A 234-amino-acid chain; its full sequence is Triosephosphate isomerase (234 aa).

8–10 (NFK) provides a ligand contact to substrate. His90 acts as the Electrophile in catalysis. The active-site Proton acceptor is the Glu159. Residues Gly165 and Ser197 each coordinate substrate.

Belongs to the triosephosphate isomerase family. Homodimer.

It localises to the cytoplasm. It carries out the reaction D-glyceraldehyde 3-phosphate = dihydroxyacetone phosphate. It functions in the pathway carbohydrate biosynthesis; gluconeogenesis. Its pathway is carbohydrate degradation; glycolysis; D-glyceraldehyde 3-phosphate from glycerone phosphate: step 1/1. Functionally, involved in the gluconeogenesis. Catalyzes stereospecifically the conversion of dihydroxyacetone phosphate (DHAP) to D-glyceraldehyde-3-phosphate (G3P). The sequence is that of Triosephosphate isomerase from Helicobacter pylori (strain G27).